A 181-amino-acid polypeptide reads, in one-letter code: Crossover junction endodeoxyribonuclease RuvC (181 aa).

Residues Asp7, Glu67, and Asp139 contribute to the active site. Mg(2+) is bound by residues Asp7, Glu67, and Asp139.

It belongs to the RuvC family. As to quaternary structure, homodimer which binds Holliday junction (HJ) DNA. The HJ becomes 2-fold symmetrical on binding to RuvC with unstacked arms; it has a different conformation from HJ DNA in complex with RuvA. In the full resolvosome a probable DNA-RuvA(4)-RuvB(12)-RuvC(2) complex forms which resolves the HJ. It depends on Mg(2+) as a cofactor.

The protein localises to the cytoplasm. The enzyme catalyses Endonucleolytic cleavage at a junction such as a reciprocal single-stranded crossover between two homologous DNA duplexes (Holliday junction).. Its function is as follows. The RuvA-RuvB-RuvC complex processes Holliday junction (HJ) DNA during genetic recombination and DNA repair. Endonuclease that resolves HJ intermediates. Cleaves cruciform DNA by making single-stranded nicks across the HJ at symmetrical positions within the homologous arms, yielding a 5'-phosphate and a 3'-hydroxyl group; requires a central core of homology in the junction. The consensus cleavage sequence is 5'-(A/T)TT(C/G)-3'. Cleavage occurs on the 3'-side of the TT dinucleotide at the point of strand exchange. HJ branch migration catalyzed by RuvA-RuvB allows RuvC to scan DNA until it finds its consensus sequence, where it cleaves and resolves the cruciform DNA. The chain is Crossover junction endodeoxyribonuclease RuvC from Ralstonia pickettii (strain 12J).